Consider the following 363-residue polypeptide: tRNA (guanine(26)-N(2))-dimethyltransferase (363 aa).

The region spanning 5–352 (VLRREGGVKF…GEYGEVLMAF (348 aa)) is the Trm1 methyltransferase domain. S-adenosyl-L-methionine contacts are provided by arginine 40, arginine 67, aspartate 85, aspartate 111, and alanine 112.

This sequence belongs to the class I-like SAM-binding methyltransferase superfamily. Trm1 family.

The catalysed reaction is guanosine(26) in tRNA + 2 S-adenosyl-L-methionine = N(2)-dimethylguanosine(26) in tRNA + 2 S-adenosyl-L-homocysteine + 2 H(+). In terms of biological role, dimethylates a single guanine residue at position 26 of a number of tRNAs using S-adenosyl-L-methionine as donor of the methyl groups. This chain is tRNA (guanine(26)-N(2))-dimethyltransferase, found in Pyrobaculum aerophilum (strain ATCC 51768 / DSM 7523 / JCM 9630 / CIP 104966 / NBRC 100827 / IM2).